Here is a 169-residue protein sequence, read N- to C-terminus: Peptide deformylase (169 aa).

Fe cation-binding residues include C91 and H133. Residue E134 is part of the active site. Fe cation is bound at residue H137.

Belongs to the polypeptide deformylase family. Fe(2+) serves as cofactor.

It carries out the reaction N-terminal N-formyl-L-methionyl-[peptide] + H2O = N-terminal L-methionyl-[peptide] + formate. Removes the formyl group from the N-terminal Met of newly synthesized proteins. Requires at least a dipeptide for an efficient rate of reaction. N-terminal L-methionine is a prerequisite for activity but the enzyme has broad specificity at other positions. The sequence is that of Peptide deformylase from Klebsiella pneumoniae (strain 342).